A 308-amino-acid polypeptide reads, in one-letter code: Phosphoribosylaminoimidazole-succinocarboxamide synthase (308 aa).

The protein belongs to the SAICAR synthetase family.

It carries out the reaction 5-amino-1-(5-phospho-D-ribosyl)imidazole-4-carboxylate + L-aspartate + ATP = (2S)-2-[5-amino-1-(5-phospho-beta-D-ribosyl)imidazole-4-carboxamido]succinate + ADP + phosphate + 2 H(+). It participates in purine metabolism; IMP biosynthesis via de novo pathway; 5-amino-1-(5-phospho-D-ribosyl)imidazole-4-carboxamide from 5-amino-1-(5-phospho-D-ribosyl)imidazole-4-carboxylate: step 1/2. The polypeptide is Phosphoribosylaminoimidazole-succinocarboxamide synthase (Xanthomonas oryzae pv. oryzae (strain PXO99A)).